The sequence spans 472 residues: 3-isopropylmalate dehydratase large subunit (472 aa).

[4Fe-4S] cluster is bound by residues cysteine 353, cysteine 414, and cysteine 417.

This sequence belongs to the aconitase/IPM isomerase family. LeuC type 1 subfamily. Heterodimer of LeuC and LeuD. The cofactor is [4Fe-4S] cluster.

The catalysed reaction is (2R,3S)-3-isopropylmalate = (2S)-2-isopropylmalate. It participates in amino-acid biosynthesis; L-leucine biosynthesis; L-leucine from 3-methyl-2-oxobutanoate: step 2/4. Its function is as follows. Catalyzes the isomerization between 2-isopropylmalate and 3-isopropylmalate, via the formation of 2-isopropylmaleate. The sequence is that of 3-isopropylmalate dehydratase large subunit from Acinetobacter baumannii (strain AB0057).